The primary structure comprises 327 residues: Ribosomal RNA small subunit methyltransferase H (327 aa).

Residues Gly36–His38, Asp61, Phe88, Asp114, and Gln121 each bind S-adenosyl-L-methionine.

It belongs to the methyltransferase superfamily. RsmH family.

Its subcellular location is the cytoplasm. The catalysed reaction is cytidine(1402) in 16S rRNA + S-adenosyl-L-methionine = N(4)-methylcytidine(1402) in 16S rRNA + S-adenosyl-L-homocysteine + H(+). Functionally, specifically methylates the N4 position of cytidine in position 1402 (C1402) of 16S rRNA. In Chlorobium phaeovibrioides (strain DSM 265 / 1930) (Prosthecochloris vibrioformis (strain DSM 265)), this protein is Ribosomal RNA small subunit methyltransferase H.